Here is a 585-residue protein sequence, read N- to C-terminus: Bestrophin-1 (585 aa).

Topologically, residues 1–31 (MTITYTSQVANARLGSFSRLLLCWRGSIYKL) are cytoplasmic. Alanine 10 is a binding site for Ca(2+). A helical membrane pass occupies residues 32-51 (LYGEFLIFLLCYYIIRFIYR). At 52 to 60 (LALTEEQQL) the chain is on the extracellular side. Residues 61 to 82 (MFEKLTLYCDSYIQLIPISFVL) traverse the membrane as a helical segment. The Cytoplasmic portion of the chain corresponds to 83 to 237 (GFYVTLVVTR…DWISIPLVYT (155 aa)). The helical transmembrane segment at 238–255 (QVVTVAVYSFFLTCLVGR) threads the bilayer. Over 256 to 274 (QFLNPAKAYPGHELDLVVP) the chain is Extracellular. The chain crosses the membrane as a helical span at residues 275-288 (VFTFLQFFFYVGWL). Residues 289 to 585 (KVAEQLINPF…ALENRDEAHS (297 aa)) are Cytoplasmic-facing. Residues glutamine 293, asparagine 296, aspartate 301, and aspartate 304 each contribute to the Ca(2+) site. Positions 346–379 (PYTAASAQFRRASFMGSTFNISLNKEEMEFQPNQ) are auto-inhibitory segment.

This sequence belongs to the anion channel-forming bestrophin (TC 1.A.46) family. Calcium-sensitive chloride channel subfamily. Interacts with YWHAG; this interaction promotes the ligand-gated L-glutamate channel activity leading to the positive regulation of NMDA glutamate receptor activity through the L-glutamate secretion. In terms of tissue distribution, predominantly expressed in the basolateral membrane of the retinal pigment epithelium.

Its subcellular location is the cell membrane. The protein resides in the basolateral cell membrane. The catalysed reaction is chloride(in) = chloride(out). The enzyme catalyses hydrogencarbonate(in) = hydrogencarbonate(out). It catalyses the reaction 4-aminobutanoate(in) = 4-aminobutanoate(out). It carries out the reaction L-glutamate(out) = L-glutamate(in). Inactivated by sulfhydryl-reactive agents. Ligand-gated anion channel that allows the movement of anions across cell membranes when activated by calcium (Ca2+). Allows the movement of chloride and hydrogencarbonate. Found in a partially open conformation leading to significantly smaller chloride movement. Upon F2R/PAR-1 activation, the sequestered calcium is released into the cytosol of astrocytes, leading to the (Ca2+)-dependent release of L-glutamate into the synaptic cleft that targets the neuronal postsynaptic GRIN2A/NMDAR receptor resulting in the synaptic plasticity regulation. Upon activation of the norepinephrine-alpha-1 adrenergic receptor signaling pathway, transports as well D-serine than L-glutamate in a (Ca2+)-dependent manner, leading to activation of adjacent NMDAR receptors and therefore regulates the heterosynaptic long-term depression and metaplasticity during initial memory acquisition. Releases the 4-aminobutanoate neurotransmitter in a (Ca2+)-dependent manner, and participates in its tonic release from cerebellar glial cells. The protein is Bestrophin-1 of Homo sapiens (Human).